A 276-amino-acid chain; its full sequence is Diaminopimelate epimerase (276 aa).

3 residues coordinate substrate: Asn-13, Gln-46, and Asn-66. Cys-75 serves as the catalytic Proton donor. Residues 76–77 (GN), Asn-159, Asn-192, and 210–211 (ER) each bind substrate. The Proton acceptor role is filled by Cys-219. 220-221 (GT) is a substrate binding site.

The protein belongs to the diaminopimelate epimerase family. Homodimer.

The protein resides in the cytoplasm. The enzyme catalyses (2S,6S)-2,6-diaminopimelate = meso-2,6-diaminopimelate. It functions in the pathway amino-acid biosynthesis; L-lysine biosynthesis via DAP pathway; DL-2,6-diaminopimelate from LL-2,6-diaminopimelate: step 1/1. Catalyzes the stereoinversion of LL-2,6-diaminopimelate (L,L-DAP) to meso-diaminopimelate (meso-DAP), a precursor of L-lysine and an essential component of the bacterial peptidoglycan. This Cellvibrio japonicus (strain Ueda107) (Pseudomonas fluorescens subsp. cellulosa) protein is Diaminopimelate epimerase.